A 460-amino-acid chain; its full sequence is tRNA modification GTPase MnmE (460 aa).

(6S)-5-formyl-5,6,7,8-tetrahydrofolate contacts are provided by Arg-29, Glu-91, and Lys-132. Residues 227-383 enclose the TrmE-type G domain; sequence GISIALIGKT…LIDTIIKKCG (157 aa). Asn-237 is a K(+) binding site. GTP-binding positions include 237-242, 256-262, and 281-284; these read NVGKSS, TNIPGTT, and DTAG. Ser-241 contributes to the Mg(2+) binding site. K(+)-binding residues include Thr-256, Ile-258, and Thr-261. Thr-262 contacts Mg(2+). Residue Lys-460 participates in (6S)-5-formyl-5,6,7,8-tetrahydrofolate binding.

Belongs to the TRAFAC class TrmE-Era-EngA-EngB-Septin-like GTPase superfamily. TrmE GTPase family. Homodimer. Heterotetramer of two MnmE and two MnmG subunits. Requires K(+) as cofactor.

The protein resides in the cytoplasm. Its function is as follows. Exhibits a very high intrinsic GTPase hydrolysis rate. Involved in the addition of a carboxymethylaminomethyl (cmnm) group at the wobble position (U34) of certain tRNAs, forming tRNA-cmnm(5)s(2)U34. The polypeptide is tRNA modification GTPase MnmE (Prochlorococcus marinus (strain MIT 9215)).